A 381-amino-acid chain; its full sequence is N-acetyldiaminopimelate deacetylase (381 aa).

Residue D71 is part of the active site. E130 (proton acceptor) is an active-site residue.

The protein belongs to the peptidase M20A family. N-acetyldiaminopimelate deacetylase subfamily.

It catalyses the reaction N-acetyl-(2S,6S)-2,6-diaminopimelate + H2O = (2S,6S)-2,6-diaminopimelate + acetate. The protein operates within amino-acid biosynthesis; L-lysine biosynthesis via DAP pathway; LL-2,6-diaminopimelate from (S)-tetrahydrodipicolinate (acetylase route): step 3/3. Functionally, catalyzes the conversion of N-acetyl-diaminopimelate to diaminopimelate and acetate. The polypeptide is N-acetyldiaminopimelate deacetylase (Ligilactobacillus salivarius (strain UCC118) (Lactobacillus salivarius)).